Here is a 146-residue protein sequence, read N- to C-terminus: Large ribosomal subunit protein uL16c (146 aa).

Belongs to the universal ribosomal protein uL16 family. In terms of assembly, part of the 50S ribosomal subunit.

It localises to the plastid. The protein localises to the chloroplast. This chain is Large ribosomal subunit protein uL16c, found in Angiopteris evecta (Mule's foot fern).